Reading from the N-terminus, the 229-residue chain is Glycerol-3-phosphate acyltransferase (229 aa).

The next 6 helical transmembrane spans lie at 2 to 22, 56 to 76, 93 to 113, 129 to 149, 151 to 171, and 178 to 198; these read WSLT…GALW, LATV…ASVI, FVVL…YPIF, LFAL…AVLL, SRYV…IVAL, and ADLD…IVVA.

Belongs to the PlsY family. In terms of assembly, probably interacts with PlsX.

The protein localises to the cell inner membrane. The catalysed reaction is an acyl phosphate + sn-glycerol 3-phosphate = a 1-acyl-sn-glycero-3-phosphate + phosphate. The protein operates within lipid metabolism; phospholipid metabolism. Catalyzes the transfer of an acyl group from acyl-phosphate (acyl-PO(4)) to glycerol-3-phosphate (G3P) to form lysophosphatidic acid (LPA). This enzyme utilizes acyl-phosphate as fatty acyl donor, but not acyl-CoA or acyl-ACP. This is Glycerol-3-phosphate acyltransferase from Salinibacter ruber (strain DSM 13855 / M31).